Reading from the N-terminus, the 138-residue chain is Phosphoribosyl-AMP cyclohydrolase (138 aa).

Residue D84 participates in Mg(2+) binding. C85 contacts Zn(2+). Mg(2+)-binding residues include D86 and D88. Zn(2+) contacts are provided by C102 and C109.

The protein belongs to the PRA-CH family. Homodimer. Requires Mg(2+) as cofactor. The cofactor is Zn(2+).

Its subcellular location is the cytoplasm. The enzyme catalyses 1-(5-phospho-beta-D-ribosyl)-5'-AMP + H2O = 1-(5-phospho-beta-D-ribosyl)-5-[(5-phospho-beta-D-ribosylamino)methylideneamino]imidazole-4-carboxamide. It participates in amino-acid biosynthesis; L-histidine biosynthesis; L-histidine from 5-phospho-alpha-D-ribose 1-diphosphate: step 3/9. Catalyzes the hydrolysis of the adenine ring of phosphoribosyl-AMP. This is Phosphoribosyl-AMP cyclohydrolase from Burkholderia multivorans (strain ATCC 17616 / 249).